The chain runs to 205 residues: MEVDINGVNRTNNSVPSTAEGSSPSKPDPEKPRCSSTPCSPIRRTVSGYQILHMDANFLVGFTTGGELLKLAQKCATTEETPGESLPAFRSKQLESGLSRSSRIYKARGRQFQPYDIPAVNGRRRRRMPSSGDKCNKAVPYEPYKAAHGPLPLCLLKGKRAHSKSLDYLNLDKMNIKESADTEVLQYQLQHLTLRGDRVFARNNT.

The disordered stretch occupies residues 1–40 (MEVDINGVNRTNNSVPSTAEGSSPSKPDPEKPRCSSTPCS). Residues 8–25 (VNRTNNSVPSTAEGSSPS) show a composition bias toward polar residues.

It belongs to the UNC119-binding protein family. Interacts with unc119 family proteins; interaction preferentially takes place when unc119 proteins are unliganded with myristoylated proteins.

Its subcellular location is the cytoplasm. The protein resides in the cell projection. The protein localises to the cilium. In terms of biological role, may play a role in immune regulation through regulation of the macrophage function. May also play a role in trafficking of proteins via its interaction with unc119 family cargo adapters. May play a role in ciliary membrane localization. This chain is Macrophage immunometabolism regulator (macir), found in Xenopus laevis (African clawed frog).